A 496-amino-acid chain; its full sequence is Transcription termination/antitermination protein NusA (496 aa).

In terms of domain architecture, S1 motif spans 135–200 (GQIITGIVKK…RGAQLFISRS (66 aa)). Positions 302-370 (CHTMDIAVDI…KNLNINENII (69 aa)) constitute a KH domain. A run of 2 repeats spans residues 364–414 (NINE…KSKL) and 440–490 (GMNA…RNIC). Residues 364–490 (NINENIIKIL…LLIMTARNIC (127 aa)) are 2 X 51 AA approximate repeats.

The protein belongs to the NusA family. In terms of assembly, monomer. Binds directly to the core enzyme of the DNA-dependent RNA polymerase and to nascent RNA.

The protein localises to the cytoplasm. Participates in both transcription termination and antitermination. This Buchnera aphidicola subsp. Acyrthosiphon pisum (strain APS) (Acyrthosiphon pisum symbiotic bacterium) protein is Transcription termination/antitermination protein NusA.